We begin with the raw amino-acid sequence, 970 residues long: Sodium/calcium exchanger 1 (970 aa).

The N-terminal stretch at 1-32 is a signal peptide; that stretch reads MLQFSLSPTLSMGFHVIAMVALLFSHVDHISA. Topologically, residues 33 to 71 are extracellular; the sequence is ETEMEGEGNETGECTGSYYCKKGVILPIWEPQDPSFGDK. A glycan (N-linked (GlcNAc...) asparagine) is linked at asparagine 41. Residues 72–92 form a helical membrane-spanning segment; it reads IARATVYFVAMVYMFLGVSII. The Cytoplasmic segment spans residues 93–133; the sequence is ADRFMSSIEVITSQEKEITIKKPNGETTKTTVRIWNETVSN. A helical transmembrane segment spans residues 134-154; it reads LTLMALGSSAPEILLSVIEVC. One copy of the Alpha-1 repeat lies at 138–178; the sequence is ALGSSAPEILLSVIEVCGHNFTAGDLGPSTIVGSAAFNMFI. Residues 155-167 are Extracellular-facing; it reads GHNFTAGDLGPST. The N-linked (GlcNAc...) asparagine glycan is linked to asparagine 157. The helical transmembrane segment at 168–188 threads the bilayer; that stretch reads IVGSAAFNMFIIIALCVYVVP. At 189–201 the chain is on the cytoplasmic side; it reads DGETRKIKHLRVF. Residues 202–222 form a helical membrane-spanning segment; it reads FVTAAWSIFAYTWLYIILSVS. The Extracellular segment spans residues 223–228; sequence SPGVVE. A helical membrane pass occupies residues 229–249; that stretch reads VWEGLLTFFFFPICVVFAWVA. Over 250–797 the chain is Cytoplasmic; the sequence is DRRLLFYKYV…FVPPTEYWNG (548 aa). Positions 251–270 are putative calmodulin-binding region; the sequence is RRLLFYKYVYKRYRAGKQRG. Residues serine 282 and serine 389 each carry the phosphoserine modification. Calx-beta domains follow at residues 393–493 and 524–624; these read VNTE…VHLS and ATVT…LEIG. Glutamate 417, aspartate 453, aspartate 478, aspartate 479, isoleucine 481, glutamate 483, glutamate 486, aspartate 530, aspartate 531, aspartate 532, glutamate 548, aspartate 584, aspartate 610, glutamate 611, glutamate 612, and glutamate 715 together coordinate Ca(2+). Residues 798–818 form a helical membrane-spanning segment; that stretch reads WACFIVSILMIGLLTAFIGDL. The Extracellular segment spans residues 819–821; it reads ASH. Residues 822 to 842 traverse the membrane as a helical segment; sequence FACTIALKDSVTAVVFVALGT. An Alpha-2 repeat occupies 839–875; sequence ALGTSVPDTFASKVAATQDQYADASIGNVTGSNAVNV. Over 843–871 the chain is Cytoplasmic; that stretch reads SVPDTFASKVAATQDQYADASIGNVTGSN. A helical transmembrane segment spans residues 872–892; that stretch reads AVNVFLGIGVAWSIAAIYHAA. Residues 893 to 903 lie on the Extracellular side of the membrane; sequence NGEQFKVSPGT. A helical transmembrane segment spans residues 904 to 924; it reads LAFSVTLFTIFAFINVGVLLY. Over 925–941 the chain is Cytoplasmic; that stretch reads RRRPEIGGELGGPRTAK. The helical transmembrane segment at 942 to 962 threads the bilayer; that stretch reads LLTSCLFVLLWLLYIFFSSLE. Residues 963–970 are Extracellular-facing; it reads AYCHIKGF.

Belongs to the Ca(2+):cation antiporter (CaCA) (TC 2.A.19) family. SLC8 subfamily.

The protein resides in the cell membrane. It carries out the reaction Ca(2+)(in) + 3 Na(+)(out) = Ca(2+)(out) + 3 Na(+)(in). Activated by micromolar levels of Ca(2+). Its function is as follows. Mediates the exchange of one Ca(2+) ion against three to four Na(+) ions across the cell membrane, and thereby contributes to the regulation of cytoplasmic Ca(2+) levels and Ca(2+)-dependent cellular processes. Contributes to Ca(2+) transport during excitation-contraction coupling in muscle. In a first phase, voltage-gated channels mediate the rapid increase of cytoplasmic Ca(2+) levels due to release of Ca(2+) stores from the endoplasmic reticulum. SLC8A1 mediates the export of Ca(2+) from the cell during the next phase, so that cytoplasmic Ca(2+) levels rapidly return to baseline. Required for normal embryonic heart development and the onset of heart contractions. This is Sodium/calcium exchanger 1 (SLC8A1) from Bos taurus (Bovine).